Here is an 84-residue protein sequence, read N- to C-terminus: uncharacterized protein (84 aa).

This sequence to M.jannaschii MJ1121.

This is an uncharacterized protein from Archaeoglobus fulgidus (strain ATCC 49558 / DSM 4304 / JCM 9628 / NBRC 100126 / VC-16).